Here is a 317-residue protein sequence, read N- to C-terminus: Ribosomal protein L11 methyltransferase (317 aa).

S-adenosyl-L-methionine-binding residues include threonine 158, glycine 179, aspartate 201, and asparagine 244.

The protein belongs to the methyltransferase superfamily. PrmA family.

The protein resides in the cytoplasm. It carries out the reaction L-lysyl-[protein] + 3 S-adenosyl-L-methionine = N(6),N(6),N(6)-trimethyl-L-lysyl-[protein] + 3 S-adenosyl-L-homocysteine + 3 H(+). Its function is as follows. Methylates ribosomal protein L11. The sequence is that of Ribosomal protein L11 methyltransferase from Lactococcus lactis subsp. cremoris (strain SK11).